Here is a 72-residue protein sequence, read N- to C-terminus: Conotoxin VnMKLT2-021 (72 aa).

The N-terminal stretch at 1 to 22 is a signal peptide; sequence MKLTCVLIVAVLFLTACQLTTA. The propeptide occupies 23–45; that stretch reads ASYARSEREHPDLGSSDQNSKLT. A disordered region spans residues 25–44; sequence YARSEREHPDLGSSDQNSKL. 3 disulfides stabilise this stretch: cysteine 48–cysteine 62, cysteine 55–cysteine 66, and cysteine 61–cysteine 71.

It belongs to the conotoxin O1 superfamily. As to expression, expressed by the venom duct.

Its subcellular location is the secreted. This is Conotoxin VnMKLT2-021 from Conus ventricosus (Mediterranean cone).